Reading from the N-terminus, the 98-residue chain is DNA-binding protein Fis (98 aa).

The H-T-H motif DNA-binding region spans 74 to 93 (QTRAALMMGINRGTLRKKLK).

Belongs to the transcriptional regulatory Fis family. In terms of assembly, homodimer.

Its function is as follows. Activates ribosomal RNA transcription. Plays a direct role in upstream activation of rRNA promoters. In Enterobacter sp. (strain 638), this protein is DNA-binding protein Fis.